Reading from the N-terminus, the 538-residue chain is MRVNDLTPQDLKAYGINDVQELVYNPDYDTLYQEELNPALEGYERGVLTNTGAIAVDTGIFTGRSPKDKYIVRDDTTRDTLWWADKGKGKNDNKPLSQETWQHLKGLVTQQLSGKRLFIIDAFCGANADTRLSVRFITEVAWQAHFVKNMFIRPTDEELQDFEPDFIVMNGAKCTNPQWKEQGLNSENFIAFNLTERIQLIGGTWYGGEMKKGMFSVMNYLLPLQGIASMHCSANVGEEGDVAVFFGLSGTGKTTLSTDPKRRLIGDDEHGWDDDGVFNFEGGCYAKTIRLSAEAEPDIFHAIRRDALLENVTVRADGTVDFDDASKTENTRVSYPIYHIDNIVKPVSKAGHASKVIFLTADAFGVLPPVSRLTASQTQYHFLSGFTAKLAGTERGVTEPTPTFSACFGAAFLSLHPTQYAEVLVKRMQAAGAQAYLVNTGWNGTGKRISIKDTRAIIDAIIDGSLDDAETFTLPMFDLAIPTKLPGVDTHILDPRNTYGSPEQWQEKAEALAKLFIENFEKYTDTPAGAALVSAGPR.

Residues R64, Y206, and K212 each coordinate substrate. ATP-binding positions include K212, H231, and G247–T255. K212 and H231 together coordinate Mn(2+). Position 268 (D268) interacts with Mn(2+). Residues E296, R332, R448–I449, and T454 contribute to the ATP site. Substrate is bound at residue R332.

This sequence belongs to the phosphoenolpyruvate carboxykinase (ATP) family. Monomer. The cofactor is Mn(2+).

Its subcellular location is the cytoplasm. It catalyses the reaction oxaloacetate + ATP = phosphoenolpyruvate + ADP + CO2. It participates in carbohydrate biosynthesis; gluconeogenesis. Functionally, involved in the gluconeogenesis. Catalyzes the conversion of oxaloacetate (OAA) to phosphoenolpyruvate (PEP) through direct phosphoryl transfer between the nucleoside triphosphate and OAA. In Enterobacter sp. (strain 638), this protein is Phosphoenolpyruvate carboxykinase (ATP).